We begin with the raw amino-acid sequence, 405 residues long: S-arrestin (405 aa).

Thr234 carries the post-translational modification Phosphothreonine.

The protein belongs to the arrestin family. As to quaternary structure, monomer. Homodimer. Homotetramer. Interacts with RHO (via the phosphorylated C-terminus).

The protein localises to the cell projection. It is found in the cilium. It localises to the photoreceptor outer segment. The protein resides in the membrane. Its function is as follows. Binds to photoactivated, phosphorylated RHO and terminates RHO signaling via G-proteins by competing with G-proteins for the same binding site on RHO. May play a role in preventing light-dependent degeneration of retinal photoreceptor cells. This is S-arrestin (SAG) from Canis lupus familiaris (Dog).